Reading from the N-terminus, the 322-residue chain is N-acetyl-gamma-glutamyl-phosphate reductase (322 aa).

Cys132 is an active-site residue.

It belongs to the NAGSA dehydrogenase family. Type 1 subfamily.

It is found in the cytoplasm. The catalysed reaction is N-acetyl-L-glutamate 5-semialdehyde + phosphate + NADP(+) = N-acetyl-L-glutamyl 5-phosphate + NADPH + H(+). The protein operates within amino-acid biosynthesis; L-arginine biosynthesis; N(2)-acetyl-L-ornithine from L-glutamate: step 3/4. Catalyzes the NADPH-dependent reduction of N-acetyl-5-glutamyl phosphate to yield N-acetyl-L-glutamate 5-semialdehyde. The sequence is that of N-acetyl-gamma-glutamyl-phosphate reductase from Bacteroides fragilis (strain ATCC 25285 / DSM 2151 / CCUG 4856 / JCM 11019 / LMG 10263 / NCTC 9343 / Onslow / VPI 2553 / EN-2).